The chain runs to 833 residues: Glycerol-3-phosphate acyltransferase (833 aa).

The HXXXXD motif signature appears at 309–314 (CHRSHI).

It belongs to the GPAT/DAPAT family.

The protein localises to the cell inner membrane. It catalyses the reaction sn-glycerol 3-phosphate + an acyl-CoA = a 1-acyl-sn-glycero-3-phosphate + CoA. It functions in the pathway phospholipid metabolism; CDP-diacylglycerol biosynthesis; CDP-diacylglycerol from sn-glycerol 3-phosphate: step 1/3. In Pseudomonas syringae pv. syringae (strain B728a), this protein is Glycerol-3-phosphate acyltransferase.